The sequence spans 305 residues: Cytochrome c biogenesis protein CcsA (305 aa).

A run of 8 helical transmembrane segments spans residues Ala-11–Phe-31, Ile-36–Leu-56, Leu-75–Ile-95, Phe-97–Leu-117, Ile-142–Phe-162, Thr-212–Asn-232, Trp-239–Leu-259, and Ala-273–Leu-293.

Belongs to the CcmF/CycK/Ccl1/NrfE/CcsA family. As to quaternary structure, may interact with Ccs1.

It is found in the plastid. The protein localises to the chloroplast thylakoid membrane. Required during biogenesis of c-type cytochromes (cytochrome c6 and cytochrome f) at the step of heme attachment. This chain is Cytochrome c biogenesis protein CcsA, found in Mesostigma viride (Green alga).